The following is an 87-amino-acid chain: U3-theraphotoxin-Hhn1f (87 aa).

The first 24 residues, 1-24 (MVNMKASMFLTSAGLVLLFVVCYA), serve as a signal peptide directing secretion. Residues 25-52 (SESEEKEFPKEMLSSIFAVDNDFKQEER) constitute a propeptide that is removed on maturation. Disulfide bonds link Cys54-Cys67, Cys61-Cys72, and Cys66-Cys79.

Belongs to the neurotoxin 10 (Hwtx-1) family. 51 (Hntx-8) subfamily. Hntx-8 sub-subfamily. Expressed by the venom gland.

It localises to the secreted. Its function is as follows. Ion channel inhibitor. The chain is U3-theraphotoxin-Hhn1f from Cyriopagopus hainanus (Chinese bird spider).